The sequence spans 357 residues: cAMP-responsive element modulator (357 aa).

Positions 101-160 (TVQVATIAETDDSADSEVIDSHKRREILSRRPSYRKILNELSSDVPGIPKIEEEKSEEEG) constitute a KID domain. Ser116, Ser142, Ser284, Ser287, and Ser290 each carry phosphoserine. Residues 299–357 (TRKRELRLMKNREAAKECRRRKKEYVKCLESRVAVLEVQNKKLIEELETLKDICSPKTD) form the bZIP domain. The interval 300–325 (RKRELRLMKNREAAKECRRRKKEYVK) is basic motif. Residues 327-348 (LESRVAVLEVQNKKLIEELETL) are leucine-zipper.

This sequence belongs to the bZIP family. Binds DNA as a dimer. Interacts with CDC34. Interacts with FHL5. Isoform delta forms a heterodimer with CREB3L4. May interact with TSSK4. Post-translationally, stimulated by phosphorylation. Phosphorylated on Ser-116 by TSSK4 in vitro. Ubiquitinated by CDC34 and RAD6B in order to be degraded by the proteasome. Isoform Tau is expressed in testis germ cells. CREM-theta1- and CREM-theta2-containing isoforms are expressed in testis.

Its subcellular location is the nucleus. Transcriptional regulator that binds the cAMP response element (CRE), a sequence present in many viral and cellular promoters. Isoforms are either transcriptional activators or repressors. Isoform Delta is an activator. Plays a role in spermatogenesis and is involved in spermatid maturation. Binding of isoform Tau (activator) to CRE is increased by CREB3L4. The CREM isoform Tau-CREB3L4 heterodimer functions through CRE and may recruit HIRA to CRE to regulate histone exchange. This is cAMP-responsive element modulator (Crem) from Rattus norvegicus (Rat).